Here is a 287-residue protein sequence, read N- to C-terminus: Small ribosomal subunit protein uS10m (287 aa).

Residues 1–33 (MSLFSPHRILLRTGSAFQLATATRALLSTSSQL) constitute a mitochondrion transit peptide. Residues 33–43 (LRNTKNAQSGL) show a composition bias toward polar residues. Positions 33–84 (LRNTKNAQSGLAEQARAEEPVASSPSQTTRPEQKSLEEETTKQTQTHADSTV) are disordered. The span at 63 to 73 (PEQKSLEEETT) shows a compositional bias: basic and acidic residues. Polar residues predominate over residues 74 to 84 (KQTQTHADSTV).

Belongs to the universal ribosomal protein uS10 family. As to quaternary structure, part of the mitochondrial small ribosomal subunit.

The protein localises to the mitochondrion. Involved in mitochondrial genome encoded proteins translation. Involved in the binding of tRNA to the ribosomes. In Emericella nidulans (strain FGSC A4 / ATCC 38163 / CBS 112.46 / NRRL 194 / M139) (Aspergillus nidulans), this protein is Small ribosomal subunit protein uS10m (rsm10).